The sequence spans 217 residues: Uridylate kinase (217 aa).

6–10 (KLSGR) serves as a coordination point for ATP. UMP is bound at residue Gly38. ATP contacts are provided by Gly39 and Arg43. UMP-binding positions include Asp60 and 107–113 (FQPGQST). ATP-binding residues include Asn134, Tyr139, and Asp142.

This sequence belongs to the UMP kinase family. As to quaternary structure, homohexamer.

The protein resides in the cytoplasm. The catalysed reaction is UMP + ATP = UDP + ADP. Its pathway is pyrimidine metabolism; CTP biosynthesis via de novo pathway; UDP from UMP (UMPK route): step 1/1. With respect to regulation, inhibited by UTP. Functionally, catalyzes the reversible phosphorylation of UMP to UDP. This chain is Uridylate kinase, found in Pyrobaculum aerophilum (strain ATCC 51768 / DSM 7523 / JCM 9630 / CIP 104966 / NBRC 100827 / IM2).